Reading from the N-terminus, the 632-residue chain is Golgin subfamily A member 8N (632 aa).

Residues 1-76 (MAEETQHNKL…TSSATLKDLE (76 aa)) are disordered. Over residues 38–50 (TNGSIPETATSGG) the composition is skewed to polar residues. Coiled coils occupy residues 85-150 (VLDS…TDLY) and 209-421 (ELEQ…SLMA). Disordered stretches follow at residues 423–445 (PGEGHGGEHLDSEGEEAPQPMPS), 505–524 (DAALGGGHHQAGAQGGDEGE), and 552–573 (NSADEPGPGAPAPQELGAADKH). The span at 508–520 (LGGGHHQAGAQGG) shows a compositional bias: gly residues.

This sequence belongs to the GOLGA8 family.

This Homo sapiens (Human) protein is Golgin subfamily A member 8N.